The chain runs to 262 residues: Cell division protein FtsQ (262 aa).

The Cytoplasmic segment spans residues 1–20; it reads MSWSDKRRHWRARKSQVNWY. The helical transmembrane segment at 21–41 threads the bilayer; it reads LWSGIGFLSLVIGSFVFGGYL. The Periplasmic portion of the chain corresponds to 42-262; it reads LHKFLNDAST…EPIINDEKPR (221 aa). One can recognise a POTRA domain in the interval 52-121; the sequence is LPIEAVAIKG…AKLRVYLQEQ (70 aa).

It belongs to the FtsQ/DivIB family. FtsQ subfamily. As to quaternary structure, part of a complex composed of FtsB, FtsL and FtsQ.

Its subcellular location is the cell inner membrane. Functionally, essential cell division protein. May link together the upstream cell division proteins, which are predominantly cytoplasmic, with the downstream cell division proteins, which are predominantly periplasmic. May control correct divisome assembly. The chain is Cell division protein FtsQ from Shewanella oneidensis (strain ATCC 700550 / JCM 31522 / CIP 106686 / LMG 19005 / NCIMB 14063 / MR-1).